An 81-amino-acid chain; its full sequence is MKLTCVMIVAVLFLTANTFVTAVPHSSNVLENLYLKARHEMENPEASKLNTRYDCEPPGNFCGMIKVGPPCCSGWCFFACA.

Residues 1–22 (MKLTCVMIVAVLFLTANTFVTA) form the signal peptide. Positions 23-51 (VPHSSNVLENLYLKARHEMENPEASKLNT) are excised as a propeptide. Cystine bridges form between Cys-55–Cys-72, Cys-62–Cys-76, and Cys-71–Cys-80.

Belongs to the conotoxin O1 superfamily. In terms of tissue distribution, expressed by the venom duct.

Its subcellular location is the secreted. In terms of biological role, omega-conotoxins act at presynaptic membranes, they bind and block voltage-gated calcium channels. Act on high voltage-activated (HVA) calcium currents in molluscan neurons. The protein is Omega-conotoxin-like Vc6.4 of Conus victoriae (Queen Victoria cone).